The chain runs to 142 residues: Chorion class A protein Ld12 (142 aa).

The first 18 residues, 1–18 (MNSFALLLVCIQACLVQS), serve as a signal peptide directing secretion.

This sequence belongs to the chorion protein family.

This protein is one of many from the eggshell of the gypsy moth. This is Chorion class A protein Ld12 from Lymantria dispar (Gypsy moth).